A 427-amino-acid chain; its full sequence is Mucorpepsin (427 aa).

An N-terminal signal peptide occupies residues 1–22; the sequence is MLFSKISSAILLTAASFALTSA. A propeptide spans 23–66 (activation peptide); sequence RPVSKQSDADDKLLALPLTSVNRKYSQTKHGQQAAEKLGGIKAF. One can recognise a Peptidase A1 domain in the interval 86–418; sequence YAIPVSIGTP…DFGKNRIGFA (333 aa). Asp-104 is a catalytic residue. Cys-117 and Cys-123 form a disulfide bridge. An N-linked (GlcNAc...) asparagine glycan is attached at Asn-254. Asp-303 is an active-site residue. Cys-338 and Cys-382 form a disulfide bridge.

Belongs to the peptidase A1 family.

It carries out the reaction Hydrolysis of proteins, favoring hydrophobic residues at P1 and P1'. Clots milk. Does not accept Lys at P1, and hence does not activate trypsinogen.. Functionally, this enzyme, capable of clotting milk is frequently used for cheese production. In Rhizomucor pusillus, this protein is Mucorpepsin.